The following is a 204-amino-acid chain: Large ribosomal subunit protein bL25 (204 aa).

The protein belongs to the bacterial ribosomal protein bL25 family. CTC subfamily. As to quaternary structure, part of the 50S ribosomal subunit; part of the 5S rRNA/L5/L18/L25 subcomplex. Contacts the 5S rRNA. Binds to the 5S rRNA independently of L5 and L18.

Its function is as follows. This is one of the proteins that binds to the 5S RNA in the ribosome where it forms part of the central protuberance. This Rhizobium etli (strain ATCC 51251 / DSM 11541 / JCM 21823 / NBRC 15573 / CFN 42) protein is Large ribosomal subunit protein bL25.